A 426-amino-acid polypeptide reads, in one-letter code: Serine--tRNA ligase (426 aa).

Position 231 to 233 (231 to 233 (TAE)) interacts with L-serine. 262–264 (RSE) provides a ligand contact to ATP. An L-serine-binding site is contributed by Glu-285. 349 to 352 (EISS) contacts ATP. Ser-385 is an L-serine binding site.

The protein belongs to the class-II aminoacyl-tRNA synthetase family. Type-1 seryl-tRNA synthetase subfamily. In terms of assembly, homodimer. The tRNA molecule binds across the dimer.

It localises to the cytoplasm. It catalyses the reaction tRNA(Ser) + L-serine + ATP = L-seryl-tRNA(Ser) + AMP + diphosphate + H(+). It carries out the reaction tRNA(Sec) + L-serine + ATP = L-seryl-tRNA(Sec) + AMP + diphosphate + H(+). It participates in aminoacyl-tRNA biosynthesis; selenocysteinyl-tRNA(Sec) biosynthesis; L-seryl-tRNA(Sec) from L-serine and tRNA(Sec): step 1/1. Functionally, catalyzes the attachment of serine to tRNA(Ser). Is also able to aminoacylate tRNA(Sec) with serine, to form the misacylated tRNA L-seryl-tRNA(Sec), which will be further converted into selenocysteinyl-tRNA(Sec). This Teredinibacter turnerae (strain ATCC 39867 / T7901) protein is Serine--tRNA ligase.